The sequence spans 797 residues: G-type lectin S-receptor-like serine/threonine-protein kinase SD2-2 (797 aa).

The first 23 residues, 1–23, serve as a signal peptide directing secretion; that stretch reads MPCTTYLPLLLLLFLLPPPSVQS. The Bulb-type lectin domain maps to 24–139; that stretch reads KVIIKGNQTI…DGSPVWQSFD (116 aa). The Extracellular segment spans residues 24–401; sequence KVIIKGNQTI…KNSKGNISKS (378 aa). N-linked (GlcNAc...) asparagine glycosylation is found at Asn-30, Asn-49, Asn-150, and Asn-197. Residues 274-310 enclose the EGF-like; atypical domain; sequence PEDPCRVYNLCGQLGFCSSELLKPCACIRGFRPRNDA. Disulfide bonds link Cys-278/Cys-290, Cys-284/Cys-298, Cys-359/Cys-381, and Cys-363/Cys-369. Positions 321-407 constitute a PAN domain; the sequence is CRRENGDSGE…ISKSIIILCS (87 aa). N-linked (GlcNAc...) asparagine glycans are attached at residues Asn-366 and Asn-397. A helical membrane pass occupies residues 402–422; the sequence is IIILCSVVGSISVLGFTLLVP. Residues 423 to 797 lie on the Cytoplasmic side of the membrane; that stretch reads LILLKRSRKR…SRSSFGRPSP (375 aa). Positions 461–742 constitute a Protein kinase domain; the sequence is NGFSDKVGHG…TVVKMLEGVV (282 aa). Residues 467–475 and Lys-490 contribute to the ATP site; that span reads VGHGGFGAV. Positions 550-566 are caM-binding; sequence SPKLLSWETRFRIALGT. The Proton acceptor role is filled by Asp-585. Residues 767–797 are disordered; sequence GTSCSEGHGCSDLNTGLSSPGSRSSFGRPSP. The segment covering 784 to 797 has biased composition (low complexity); that stretch reads SSPGSRSSFGRPSP.

Belongs to the protein kinase superfamily. Ser/Thr protein kinase family. Autophosphorylated. In terms of tissue distribution, expressed in the shoot apex and roots, specifically in lateral roots and at the root-hypocotyl transition zone.

The protein localises to the cell membrane. The catalysed reaction is L-seryl-[protein] + ATP = O-phospho-L-seryl-[protein] + ADP + H(+). The enzyme catalyses L-threonyl-[protein] + ATP = O-phospho-L-threonyl-[protein] + ADP + H(+). In terms of biological role, serine/threonine-protein kinase. This is G-type lectin S-receptor-like serine/threonine-protein kinase SD2-2 (SD22) from Arabidopsis thaliana (Mouse-ear cress).